We begin with the raw amino-acid sequence, 274 residues long: Photosystem II extrinsic protein O (274 aa).

The first 28 residues, 1–28 (MRFRPSIVALLSVCFGLLTFLYSGSAFA), serve as a signal peptide directing secretion.

This sequence belongs to the PsbO family. As to quaternary structure, PSII is composed of 1 copy each of membrane proteins PsbA, PsbB, PsbC, PsbD, PsbE, PsbF, PsbH, PsbI, PsbJ, PsbK, PsbL, PsbM, PsbT, PsbX, PsbY, PsbZ, Psb30/Ycf12, peripheral proteins PsbO, CyanoQ (PsbQ), PsbU, PsbV and a large number of cofactors. It forms dimeric complexes. Contacts PsbQ.

The protein localises to the cellular thylakoid membrane. One of the extrinsic, lumenal subunits of photosystem II (PSII), which stabilize and protect the oxygen-evolving complex. PSII is a light-driven water plastoquinone oxidoreductase, using light energy to abstract electrons from H(2)O, generating a proton gradient subsequently used for ATP formation. Required for dimerization of PSII and for binding of PsbQ to PSII. This Synechocystis sp. (strain ATCC 27184 / PCC 6803 / Kazusa) protein is Photosystem II extrinsic protein O.